A 467-amino-acid chain; its full sequence is UDP-N-acetylmuramate--L-alanine ligase (467 aa).

114-120 (GTHGKTT) contacts ATP.

The protein belongs to the MurCDEF family.

Its subcellular location is the cytoplasm. The catalysed reaction is UDP-N-acetyl-alpha-D-muramate + L-alanine + ATP = UDP-N-acetyl-alpha-D-muramoyl-L-alanine + ADP + phosphate + H(+). It participates in cell wall biogenesis; peptidoglycan biosynthesis. Cell wall formation. The sequence is that of UDP-N-acetylmuramate--L-alanine ligase from Bradyrhizobium diazoefficiens (strain JCM 10833 / BCRC 13528 / IAM 13628 / NBRC 14792 / USDA 110).